A 398-amino-acid polypeptide reads, in one-letter code: S-adenosylmethionine synthase (398 aa).

Position 17 (histidine 17) interacts with ATP. Aspartate 19 contacts Mg(2+). K(+) is bound at residue glutamate 45. L-methionine is bound by residues glutamate 58 and glutamine 101. The flexible loop stretch occupies residues 101-111 (QSPDIAQGVDT). ATP contacts are provided by residues 176–178 (DGK), 243–244 (RF), aspartate 252, 258–259 (RK), and lysine 279. Aspartate 252 contacts L-methionine. Lysine 283 contributes to the L-methionine binding site.

It belongs to the AdoMet synthase family. As to quaternary structure, homotetramer; dimer of dimers. It depends on Mg(2+) as a cofactor. K(+) serves as cofactor.

Its subcellular location is the cytoplasm. The enzyme catalyses L-methionine + ATP + H2O = S-adenosyl-L-methionine + phosphate + diphosphate. It participates in amino-acid biosynthesis; S-adenosyl-L-methionine biosynthesis; S-adenosyl-L-methionine from L-methionine: step 1/1. Functionally, catalyzes the formation of S-adenosylmethionine (AdoMet) from methionine and ATP. The overall synthetic reaction is composed of two sequential steps, AdoMet formation and the subsequent tripolyphosphate hydrolysis which occurs prior to release of AdoMet from the enzyme. In Staphylococcus saprophyticus subsp. saprophyticus (strain ATCC 15305 / DSM 20229 / NCIMB 8711 / NCTC 7292 / S-41), this protein is S-adenosylmethionine synthase.